The primary structure comprises 332 residues: MLLVVAAFIVAFVLLLYMISPLISPKPLKLNGAHVVVTGGSSGIGKCIAMECYKHGAFITLVARDEHKLVQAKKEVEKFAINDKQVVLCISVDVAKDYSQVESVIKQAQEKLGPVDMLVNCAGTSLSGKFEEVEVDHFKKMMEVNYLGSVYPTRAVITTMKERRMGRIMFVSSQAGQIGLFGYTAYSPSKFALRGLAEALQMEMKPYNIYVTVAYPPDTDTPGFAEENKTKPLETKLISETSGVSQPEQVAKIVVKDAVQGNFTSSFGPDGYMLSALTCGMSPVTSITEGLQQIVTMGLFRTIALFYLGSFDSIVRRCMIQREQCKAADKRE.

The first 25 residues, 1–25 (MLLVVAAFIVAFVLLLYMISPLISP), serve as a signal peptide directing secretion. The NADPH site is built by Gly-39, Ser-41, Ser-42, Gly-43, Arg-64, Asp-65, Lys-68, and Asp-93. The GXSXG signature appears at 39–43 (GGSSG). Residue Ser-172 is the Proton donor of the active site. Tyr-186 (proton acceptor) is an active-site residue. Residues Tyr-186 and Lys-190 each contribute to the NADP(+) site. Catalysis depends on Lys-190, which acts as the Lowers pKa of active site Tyr.

It belongs to the short-chain dehydrogenases/reductases (SDR) family.

The protein localises to the endoplasmic reticulum. It carries out the reaction sphinganine + NADP(+) = 3-oxosphinganine + NADPH + H(+). Its pathway is lipid metabolism; sphingolipid metabolism. Functionally, catalyzes the reduction of 3'-oxosphinganine (3-ketodihydrosphingosine/KDS) to sphinganine (dihydrosphingosine/DHS), the second step of de novo sphingolipid biosynthesis. The sequence is that of 3-dehydrosphinganine reductase (kdsr) from Danio rerio (Zebrafish).